A 385-amino-acid chain; its full sequence is Leucine aminopeptidase 1 (385 aa).

An N-terminal signal peptide occupies residues 1 to 20 (MKFPSLLSLGVAASTTIVAA). Residues 21–87 (VPDQKPIGDI…FPKTFAQTTV (67 aa)) constitute a propeptide that is removed on maturation. N-linked (GlcNAc...) asparagine glycosylation occurs at asparagine 177. Histidine 185, aspartate 204, glutamate 243, and aspartate 270 together coordinate Zn(2+). The cysteines at positions 319 and 323 are disulfide-linked. Residue histidine 352 participates in Zn(2+) binding.

It belongs to the peptidase M28 family. M28E subfamily. In terms of assembly, monomer. It depends on Zn(2+) as a cofactor.

It is found in the secreted. Functionally, extracellular aminopeptidase that allows assimilation of proteinaceous substrates. The chain is Leucine aminopeptidase 1 (LAP1) from Ajellomyces capsulatus (strain G186AR / H82 / ATCC MYA-2454 / RMSCC 2432) (Darling's disease fungus).